A 557-amino-acid polypeptide reads, in one-letter code: Urocanate hydratase (557 aa).

Residues 53-54, glutamine 131, 177-179, aspartate 197, arginine 202, 243-244, 264-268, 274-275, and tyrosine 323 each bind NAD(+); these read GG, GMG, NA, QTSAH, and YL. Cysteine 411 is a catalytic residue. Glycine 493 lines the NAD(+) pocket.

Belongs to the urocanase family. NAD(+) is required as a cofactor.

It localises to the cytoplasm. The catalysed reaction is 4-imidazolone-5-propanoate = trans-urocanate + H2O. The protein operates within amino-acid degradation; L-histidine degradation into L-glutamate; N-formimidoyl-L-glutamate from L-histidine: step 2/3. Functionally, catalyzes the conversion of urocanate to 4-imidazolone-5-propionate. This Hahella chejuensis (strain KCTC 2396) protein is Urocanate hydratase.